Consider the following 123-residue polypeptide: Large ribosomal subunit protein bL12 (123 aa).

This sequence belongs to the bacterial ribosomal protein bL12 family. As to quaternary structure, homodimer. Part of the ribosomal stalk of the 50S ribosomal subunit. Forms a multimeric L10(L12)X complex, where L10 forms an elongated spine to which 2 to 4 L12 dimers bind in a sequential fashion. Binds GTP-bound translation factors.

In terms of biological role, forms part of the ribosomal stalk which helps the ribosome interact with GTP-bound translation factors. Is thus essential for accurate translation. The protein is Large ribosomal subunit protein bL12 of Acholeplasma laidlawii (strain PG-8A).